The chain runs to 244 residues: tRNA (guanine-N(7)-)-methyltransferase (244 aa).

Positions 1 to 20 (MTNPFDSAGSKAPPKPFTVS) are disordered. Residues glutamate 75, glutamate 100, aspartate 127, and aspartate 150 each coordinate S-adenosyl-L-methionine. Aspartate 150 is a catalytic residue. Lysine 154 contacts substrate. The tract at residues 156–161 (RHNKRR) is interaction with RNA. Substrate contacts are provided by residues aspartate 186 and 223 to 226 (THFE).

This sequence belongs to the class I-like SAM-binding methyltransferase superfamily. TrmB family.

It catalyses the reaction guanosine(46) in tRNA + S-adenosyl-L-methionine = N(7)-methylguanosine(46) in tRNA + S-adenosyl-L-homocysteine. The protein operates within tRNA modification; N(7)-methylguanine-tRNA biosynthesis. Catalyzes the formation of N(7)-methylguanine at position 46 (m7G46) in tRNA. The protein is tRNA (guanine-N(7)-)-methyltransferase of Stenotrophomonas maltophilia (strain K279a).